The chain runs to 173 residues: Bifunctional protein PyrR (173 aa).

Substrate-binding positions include 40 to 41, 97 to 105, and R130; these read TR and DDVLYTGRT. The short motif at 93–105 is the PRPP-binding element; it reads VILIDDVLYTGRT.

It belongs to the purine/pyrimidine phosphoribosyltransferase family. PyrR subfamily. As to quaternary structure, homodimer and homohexamer; in equilibrium.

The enzyme catalyses UMP + diphosphate = 5-phospho-alpha-D-ribose 1-diphosphate + uracil. Regulates transcriptional attenuation of the pyrimidine nucleotide (pyr) operon by binding in a uridine-dependent manner to specific sites on pyr mRNA. This disrupts an antiterminator hairpin in the RNA and favors formation of a downstream transcription terminator, leading to a reduced expression of downstream genes. Functionally, also displays a weak uracil phosphoribosyltransferase activity which is not physiologically significant. This Streptococcus pyogenes serotype M6 (strain ATCC BAA-946 / MGAS10394) protein is Bifunctional protein PyrR.